A 643-amino-acid chain; its full sequence is Nicastrin (643 aa).

Positions 1–20 (MRFKNVLVLLLLLVFSVINS) are cleaved as a signal peptide. Topologically, residues 21-611 (EPSAPATISD…VFKIGNSTTE (591 aa)) are extracellular. Cysteine 42 and cysteine 54 form a disulfide bridge. Asparagine 96 and asparagine 166 each carry an N-linked (GlcNAc...) asparagine glycan. 2 cysteine pairs are disulfide-bonded: cysteine 204–cysteine 210 and cysteine 308–cysteine 318. N-linked (GlcNAc...) asparagine glycosylation is found at asparagine 333 and asparagine 385. Cystine bridges form between cysteine 479/cysteine 486, cysteine 540/cysteine 551, and cysteine 546/cysteine 556. Asparagine 584 carries N-linked (GlcNAc...) asparagine glycosylation. Residues 612-632 (IWFLVSGLIELLVSIGLILYV) form a helical membrane-spanning segment. The Cytoplasmic segment spans residues 633 to 643 (KKFLSNRYKLL).

Belongs to the nicastrin family. As to quaternary structure, component of the gamma-secretase complex, a complex composed of a presenilin homodimer, nicastrin, aph1 and pen2.

The protein localises to the membrane. Essential subunit of the gamma-secretase complex, an endoprotease complex that catalyzes the intramembrane cleavage of integral membrane proteins such as Notch receptors and APP (amyloid-beta precursor protein). The chain is Nicastrin from Dictyostelium purpureum (Slime mold).